Reading from the N-terminus, the 475-residue chain is Ribulose bisphosphate carboxylase large chain (475 aa).

Residues 1–2 (MS) constitute a propeptide that is removed on maturation. An N-acetylproline modification is found at Pro-3. The residue at position 14 (Lys-14) is an N6,N6,N6-trimethyllysine. 2 residues coordinate substrate: Asn-123 and Thr-173. The Proton acceptor role is filled by Lys-175. Lys-177 provides a ligand contact to substrate. Mg(2+) contacts are provided by Lys-201, Asp-203, and Glu-204. N6-carboxylysine is present on Lys-201. His-294 acts as the Proton acceptor in catalysis. Substrate-binding residues include Arg-295, His-327, and Ser-379.

This sequence belongs to the RuBisCO large chain family. Type I subfamily. In terms of assembly, heterohexadecamer of 8 large chains and 8 small chains; disulfide-linked. The disulfide link is formed within the large subunit homodimers. Requires Mg(2+) as cofactor. Post-translationally, the disulfide bond which can form in the large chain dimeric partners within the hexadecamer appears to be associated with oxidative stress and protein turnover.

The protein localises to the plastid. It is found in the chloroplast. The catalysed reaction is 2 (2R)-3-phosphoglycerate + 2 H(+) = D-ribulose 1,5-bisphosphate + CO2 + H2O. It carries out the reaction D-ribulose 1,5-bisphosphate + O2 = 2-phosphoglycolate + (2R)-3-phosphoglycerate + 2 H(+). In terms of biological role, ruBisCO catalyzes two reactions: the carboxylation of D-ribulose 1,5-bisphosphate, the primary event in carbon dioxide fixation, as well as the oxidative fragmentation of the pentose substrate in the photorespiration process. Both reactions occur simultaneously and in competition at the same active site. This is Ribulose bisphosphate carboxylase large chain from Pinus edulis (Pinyon pine).